A 393-amino-acid polypeptide reads, in one-letter code: Envelope glycoprotein M (393 aa).

The Intravirion segment spans residues 1–14; it reads MCGPRNAEAVSWRS. A helical transmembrane segment spans residues 15–35; that stretch reads WLIEVCGFALAALTLVLTLIF. Residues 36 to 83 are Virion surface-facing; it reads ASLPEMGFPCFYATVADYDTLNDTSGGVWTRQPLVAPALFLETPTVTS. A helical membrane pass occupies residues 84–104; it reads FFGFTATVLLAHALYAVAGAV. Residues 105-130 lie on the Intravirion side of the membrane; sequence VLRREAGRLAFQPSVVLYAASTVAAP. The chain crosses the membrane as a helical span at residues 131–151; it reads GTLMLGALCAWTLQAVVLLMA. The Virion surface portion of the chain corresponds to 152–154; sequence HKQ. Residues 155-175 form a helical membrane-spanning segment; the sequence is AGLAAAAYITHFVFLALFGAC. Residues 176–207 lie on the Intravirion side of the membrane; it reads HACKGTGDVRAALAASPPLRRVAVHARAVVTN. Residues 208 to 228 form a helical membrane-spanning segment; that stretch reads VVLGAVGLGAAVVGLMLGVLL. Residues 229 to 241 are Virion surface-facing; that stretch reads ANSFHISLWKTAE. A helical transmembrane segment spans residues 242-262; sequence AALAVFTLLALALMVFVEVVV. Residues 263–264 lie on the Intravirion side of the membrane; the sequence is SG. The chain crosses the membrane as a helical span at residues 265–285; that stretch reads YVQVLPTPAFCVLVASAAFGV. The Virion surface segment spans residues 286-303; the sequence is SAHRYFAKFSEALGETHG. The helical transmembrane segment at 304–324 threads the bilayer; that stretch reads VVIGTRAVLAVLSLIALAMIV. Residues 325 to 393 lie on the Intravirion side of the membrane; the sequence is VRLVRACIAH…EVVYENLGFE (69 aa).

This sequence belongs to the herpesviridae glycoprotein M family. As to quaternary structure, interacts (via N-terminus) with gN (via N-terminus). The gM-gN heterodimer forms the gCII complex.

The protein localises to the virion membrane. The protein resides in the host Golgi apparatus. It is found in the host trans-Golgi network. Its subcellular location is the host endosome membrane. It localises to the host nucleus inner membrane. Its function is as follows. Envelope glycoprotein important for virion assembly and egress. Plays a role in the correct incorporation of gH-gL into virion membrane. Directs the glycoprotein N (gN) to the host trans-Golgi network. In Suid herpesvirus 1 (SuHV-1), this protein is Envelope glycoprotein M.